The following is a 206-amino-acid chain: Large ribosomal subunit protein uL4 (206 aa).

The protein belongs to the universal ribosomal protein uL4 family. Part of the 50S ribosomal subunit.

Its function is as follows. One of the primary rRNA binding proteins, this protein initially binds near the 5'-end of the 23S rRNA. It is important during the early stages of 50S assembly. It makes multiple contacts with different domains of the 23S rRNA in the assembled 50S subunit and ribosome. In terms of biological role, forms part of the polypeptide exit tunnel. This is Large ribosomal subunit protein uL4 from Cereibacter sphaeroides (strain KD131 / KCTC 12085) (Rhodobacter sphaeroides).